The following is a 99-amino-acid chain: Regulatory protein FanB (99 aa).

Trans-acting protein involved in the regulation of the biogenesis of K99 fimbriae (FanC). The polypeptide is Regulatory protein FanB (fanB) (Escherichia coli).